A 483-amino-acid chain; its full sequence is Regulatory protein ViaA (483 aa).

The protein belongs to the ViaA family. Homodimer. Interacts with RavA.

It localises to the cytoplasm. In terms of biological role, component of the RavA-ViaA chaperone complex, which may act on the membrane to optimize the function of some of the respiratory chains. ViaA stimulates the ATPase activity of RavA. This chain is Regulatory protein ViaA, found in Salmonella agona (strain SL483).